We begin with the raw amino-acid sequence, 321 residues long: Transaldolase (321 aa).

Lys-132 serves as the catalytic Schiff-base intermediate with substrate.

It belongs to the transaldolase family. Type 1 subfamily. Homodimer.

It localises to the cytoplasm. The catalysed reaction is D-sedoheptulose 7-phosphate + D-glyceraldehyde 3-phosphate = D-erythrose 4-phosphate + beta-D-fructose 6-phosphate. Its pathway is carbohydrate degradation; pentose phosphate pathway; D-glyceraldehyde 3-phosphate and beta-D-fructose 6-phosphate from D-ribose 5-phosphate and D-xylulose 5-phosphate (non-oxidative stage): step 2/3. Transaldolase is important for the balance of metabolites in the pentose-phosphate pathway. The polypeptide is Transaldolase (Agrobacterium fabrum (strain C58 / ATCC 33970) (Agrobacterium tumefaciens (strain C58))).